The following is a 124-amino-acid chain: uncharacterized protein (124 aa).

The N-terminal stretch at 1–19 (MRLLVQKVILIYLARYAKS) is a signal peptide. Helical transmembrane passes span 37 to 57 (IAEFLWVYVGSALAYVVGVKF) and 86 to 108 (LGALALITIARAFCVAHINIIII).

The protein resides in the membrane. This is an uncharacterized protein from Saccharomyces cerevisiae (strain ATCC 204508 / S288c) (Baker's yeast).